The chain runs to 230 residues: Sugar fermentation stimulation protein homolog (230 aa).

Belongs to the SfsA family.

This chain is Sugar fermentation stimulation protein homolog, found in Clostridium botulinum (strain Loch Maree / Type A3).